The following is a 30-amino-acid chain: Snaclec coagulation factor IX/factor X-binding protein subunit B (30 aa).

Cysteines 2 and 13 form a disulfide. The region spanning 9–30 is the C-type lectin domain; that stretch reads YEGHCYRVFTEPQNWADAEKFC.

Belongs to the snaclec family. As to quaternary structure, heterodimer of subunits A and B; disulfide-linked. In terms of processing, glycosylated. In terms of tissue distribution, expressed by the venom gland.

The protein localises to the secreted. Functionally, anticoagulant protein which binds to the gamma-carboxyglutamic acid-domain regions of factors IX (F9) and factor X (F10) in the presence of calcium with a 1 to 1 stoichiometry. In Bothrops jararaca (Jararaca), this protein is Snaclec coagulation factor IX/factor X-binding protein subunit B.